A 490-amino-acid polypeptide reads, in one-letter code: Ribosome biogenesis protein YTM1 (490 aa).

The disordered stretch occupies residues 1–22 (MDGLEDGPLDASTATSQKPQRQ). Residues 23-104 (VRLKLTSRHE…ETTLDVEYVR (82 aa)) form a ubiquitin-like (UBL) domain region. WD repeat units follow at residues 116 to 168 (LHDD…IALS), 175 to 213 (GHTASVKCARMVSPSQIISSGLDRTVRLWKYTESEDGFS), 224 to 263 (GHKGSVDSISMHAQSHRILSASADHSVGFWSTRKSENPAA), 298 to 338 (SHTA…LVDT), 340 to 379 (TASHSLLSVSHMPELSLLASGTSARHITLIDPRASATTVS), 385 to 425 (GHTN…TDKD), and 449 to 487 (GEGVKVFDVCWDKSVGIVSSGEDKMIQINRGEGVLPNGG). The disordered stretch occupies residues 255–286 (TRKSENPAAPESLLPSNTSRSSKRRKLNSSVS).

This sequence belongs to the WD repeat WDR12/YTM1 family. As to quaternary structure, component of the NOP7 complex, composed of ERB1, NOP7 and YTM1. The complex is held together by ERB1, which interacts with NOP7 via its N-terminal domain and with YTM1 via a high-affinity interaction between the seven-bladed beta-propeller domains of the 2 proteins. The NOP7 complex associates with the 66S pre-ribosome. Interacts (via UBL domain) with MDN1 (via VWFA/MIDAS domain).

The protein resides in the nucleus. Its subcellular location is the nucleolus. It is found in the nucleoplasm. Component of the NOP7 complex, which is required for maturation of the 25S and 5.8S ribosomal RNAs and formation of the 60S ribosome. The protein is Ribosome biogenesis protein YTM1 of Ajellomyces capsulatus (strain NAm1 / WU24) (Darling's disease fungus).